The primary structure comprises 100 residues: MINEERLLKVVLAPHVSEKATLAAEVNNTVVFKVLKDANKEEIKAAVEKLFEVEVNSVRTVNVKGKTKRHGASFGKRKDWKKAYVVLKEGQDIDFAGSEG.

Belongs to the universal ribosomal protein uL23 family. In terms of assembly, part of the 50S ribosomal subunit. Contacts protein L29, and trigger factor when it is bound to the ribosome.

Its function is as follows. One of the early assembly proteins it binds 23S rRNA. One of the proteins that surrounds the polypeptide exit tunnel on the outside of the ribosome. Forms the main docking site for trigger factor binding to the ribosome. This chain is Large ribosomal subunit protein uL23, found in Pseudoalteromonas atlantica (strain T6c / ATCC BAA-1087).